A 2896-amino-acid chain; its full sequence is 3'-5' exoribonuclease HELZ2 (2896 aa).

C3H1-type zinc fingers lie at residues valine 90–glutamate 114 and glycine 217–valine 246. The C2H2-type; atypical zinc finger occupies leucine 287–histidine 311. A C3H1-type 3 zinc finger spans residues serine 327 to glutamine 357. Residues valine 770–glutamine 1126 form the UvrD-like helicase ATP-binding domain. Glycine 791 to threonine 798 contacts ATP. The interval arginine 810 to alanine 1306 is interaction with THRAP3. Residues aspartate 914–alanine 917 carry the DEAA box motif. The residue at position 1253 (serine 1253) is a Phosphoserine. 3 short sequence motifs (LXXLL motif) span residues leucine 1322–leucine 1326, leucine 1365–leucine 1369, and leucine 1420–leucine 1424. An RNB domain is found at arginine 1581–leucine 1938. Positions leucine 2259 to proline 2263 match the LXXLL motif 4 motif. Positions proline 2382–serine 2896 are interaction with THRAP3. The UvrD-like helicase ATP-binding 2 domain occupies leucine 2400–histidine 2675. Glycine 2421–threonine 2428 lines the ATP pocket. Residues leucine 2476–leucine 2480 carry the LXXLL motif 5 motif.

It belongs to the DNA2/NAM7 helicase family. As to quaternary structure, interacts with PPARA (via DNA-binding domain) and PPARG; the interaction stimulates the transcriptional activity of PPARA and PPARG. Interacts with THRAP3; the interaction is direct and HELZ2 and THRAP3 synergistically enhance the transcriptional activity of PPARG. It is probably part of the peroxisome proliferator activated receptor alpha interacting complex (PRIC). In terms of tissue distribution, expressed in various tissues including heart, pancreas, skeletal muscle, colon, spleen, liver, kidney, lung, peripheral blood and placenta.

Its subcellular location is the cytoplasm. It catalyses the reaction Exonucleolytic cleavage in the 3'- to 5'-direction to yield nucleoside 5'-phosphates.. It carries out the reaction ATP + H2O = ADP + phosphate + H(+). Its function is as follows. Can degrade highly structured RNAs through its concerted ATP-dependent RNA helicase and 3' to 5' exoribonuclease activities. Shows a strong preference for pyrimidine over purine residues for its nuclease activity. Acts as a transcriptional coactivator for a number of nuclear receptors including PPARA, PPARG, THRA, THRB and RXRA. The chain is 3'-5' exoribonuclease HELZ2 from Homo sapiens (Human).